Reading from the N-terminus, the 131-residue chain is Small ribosomal subunit protein uS9 (131 aa).

It belongs to the universal ribosomal protein uS9 family.

The chain is Small ribosomal subunit protein uS9 from Mannheimia succiniciproducens (strain KCTC 0769BP / MBEL55E).